A 211-amino-acid polypeptide reads, in one-letter code: Large ribosomal subunit protein uL3 (211 aa).

Residues 125 to 148 (GPASHGSKKWHRRPGSIGQRKTPG) form a disordered region.

Belongs to the universal ribosomal protein uL3 family. In terms of assembly, part of the 50S ribosomal subunit. Forms a cluster with proteins L14 and L19. Also contacts proteins L13 and L17.

In terms of biological role, one of the primary rRNA binding proteins, it binds directly near the 3'-end of the 23S rRNA, where it nucleates assembly of the 50S subunit. This chain is Large ribosomal subunit protein uL3 (rplC), found in Deinococcus radiodurans (strain ATCC 13939 / DSM 20539 / JCM 16871 / CCUG 27074 / LMG 4051 / NBRC 15346 / NCIMB 9279 / VKM B-1422 / R1).